Consider the following 1401-residue polypeptide: Uveal autoantigen with coiled-coil domains and ankyrin repeats protein (1401 aa).

6 ANK repeats span residues 25-53 (LMRA…KLDV), 54-83 (EGRS…DITT), 87-116 (AGRN…PTEH), 120-149 (QGRT…SVNA), 153-182 (DGRT…DINS), and 186-215 (QNRT…DVTL). Serine 265 bears the Phosphoserine mark. Coiled-coil stretches lie at residues 273–361 (TKSN…SRFK), 423–827 (ENEI…EKIY), and 856–1368 (ALSS…VIAI). Lysine 1020 participates in a covalent cross-link: Glycyl lysine isopeptide (Lys-Gly) (interchain with G-Cter in SUMO2).

As to quaternary structure, component of the apoptosome complex, composed of APAF1, pro-caspase-9 and UACA. In the complex, it probably interacts directly with APAF1. Interacts with LGALS3. Interacts with ARF6 and ACTB. Interacts with RAB39A. In terms of tissue distribution, highly expressed in muscle and heart, moderately in liver, kidney and pancreas, and weakly in placenta and lung.

Its subcellular location is the nucleus. The protein localises to the cytoplasm. It localises to the cytoskeleton. In terms of biological role, regulates APAF1 expression and plays an important role in the regulation of stress-induced apoptosis. Promotes apoptosis by regulating three pathways, apoptosome up-regulation, LGALS3/galectin-3 down-regulation and NF-kappa-B inactivation. Regulates the redistribution of APAF1 into the nucleus after proapoptotic stress. Down-regulates the expression of LGALS3 by inhibiting NFKB1. Functionally, modulates isoactin dynamics to regulate the morphological alterations required for cell growth and motility. Interaction with ARF6 may modulate cell shape and motility after injury. May be involved in multiple neurite formation. The protein is Uveal autoantigen with coiled-coil domains and ankyrin repeats protein (UACA) of Bos taurus (Bovine).